The primary structure comprises 2032 residues: Cytoskeleton-associated protein 5 (2032 aa).

TOG regions lie at residues 1-223 (MGDD…KLPT), 268-502 (YELL…LVHG), and 588-817 (SIEV…GQSP). N6-acetyllysine is present on K48. HEAT repeat units lie at residues 159-197 (IISL…WNRD), 356-394 (GQYA…TTTL), and 434-472 (KSLL…VVGE). The tract at residues 501–579 (HGKKSGLATE…GTKNKKGLET (79 aa)) is disordered. Residues 750–788 (ELNVKAFISNVKTALAATNPAVRTSAITLLGVMYLYVGP) form an HEAT 4 repeat. A disordered region spans residues 811–848 (KMQGQSPPAPTRGIAKHSTSATDEGEDGEEPGEGGNDV). At S816 the chain carries Phosphoserine. Positions 833–842 (DEGEDGEEPG) are enriched in acidic residues. TOG regions lie at residues 853–1081 (PRIE…ANMP) and 1193–1428 (IEQL…KRPS). HEAT repeat units lie at residues 855–893 (IEIS…EAKF), 936–974 (RQHV…QTGM), and 1013–1051 (PTDL…HLGY). A compositionally biased stretch (low complexity) spans 1078–1095 (ANMPSKPAAPAKAMSKPM). A disordered region spans residues 1078 to 1156 (ANMPSKPAAP…KTTLKEDDDK (79 aa)). HEAT repeat units follow at residues 1284-1322 (ENEA…VYPA), 1324-1357 (KMFP…SYGM), and 1361-1399 (QPTP…VHGD). Residues 1420–1459 (IKRSAKRPSAAPVKQAEEKPQRTQNINSNANMLRKGPAED) form a disordered region. Positions 1441–1450 (RTQNINSNAN) are enriched in polar residues. S1469 carries the phosphoserine modification. Residues 1801 to 1822 (SMDQTGSKSDKETEKGASRIDE) are disordered. Over residues 1808-1822 (KSDKETEKGASRIDE) the composition is skewed to basic and acidic residues. S1861 is subject to Phosphoserine. Disordered stretches follow at residues 1893–1926 (SKGR…GNTN) and 1948–2032 (LDNT…SSRK). Residues 1909 to 1921 (VTCVPTPTSTVSS) are compositionally biased toward low complexity. Residues 1932-1957 (PSVYLERLKILRQRCGLDNTKQDDRP) form an interaction with TACC3 region. The span at 1972-1983 (ASSTDMLHSKLS) shows a compositional bias: polar residues. Residues 1984–1997 (QLRESREQHQHSDL) show a composition bias toward basic and acidic residues. The span at 2002–2015 (THSAGTMTSSSSTT) shows a compositional bias: low complexity. Basic and acidic residues predominate over residues 2018–2032 (DDLKKRLERIKSSRK).

Belongs to the TOG/XMAP215 family. As to quaternary structure, interacts with TACC1. Interacts with HNRNPA2B1. Interacts with TACC3 independently of clathrin. Interacts with TACC3 and clathrin forming the TACC3/ch-TOG/clathrin complex located at spindle inter-microtubules bridges. Interacts with NDC80; indicative for an association with the NDC80 complex. Interacts with SLAIN2. Interacts with SLAIN1.

The protein localises to the cytoplasm. It localises to the cytoskeleton. Its subcellular location is the microtubule organizing center. It is found in the centrosome. The protein resides in the spindle pole. The protein localises to the spindle. It localises to the chromosome. Its subcellular location is the centromere. It is found in the kinetochore. Binds to the plus end of microtubules and regulates microtubule dynamics and microtubule organization. Acts as a processive microtubule polymerase. Promotes cytoplasmic microtubule nucleation and elongation. Plays a major role in organizing spindle poles. In spindle formation protects kinetochore microtubules from depolymerization by KIF2C and has an essential role in centrosomal microtubule assembly independently of KIF2C activity. Contributes to centrosome integrity. Acts as a component of the TACC3/ch-TOG/clathrin complex proposed to contribute to stabilization of kinetochore fibers of the mitotic spindle by acting as inter-microtubule bridge. The TACC3/ch-TOG/clathrin complex is required for the maintenance of kinetochore fiber tension. Enhances the strength of NDC80 complex-mediated kinetochore-tip microtubule attachments. The polypeptide is Cytoskeleton-associated protein 5 (Mus musculus (Mouse)).